The primary structure comprises 86 residues: Cytochrome c oxidase subunit 6B1 (86 aa).

A2 carries the post-translational modification N-acetylalanine. The CHCH domain occupies 27 to 73 (TRNCWQNYLDFHRCEKAMTAKGGDVSVCEWYRRVYKSLCPISWVSTW). The Cx9C motif signature appears at 30–40 (CWQNYLDFHRC). Disulfide bonds link C30-C65 and C40-C54. Positions 54 to 65 (CEWYRRVYKSLC) match the Cx10C motif motif. K62 carries the post-translational modification N6-acetyllysine.

This sequence belongs to the cytochrome c oxidase subunit 6B family. Component of the cytochrome c oxidase (complex IV, CIV), a multisubunit enzyme composed of 14 subunits. The complex is composed of a catalytic core of 3 subunits MT-CO1, MT-CO2 and MT-CO3, encoded in the mitochondrial DNA, and 11 supernumerary subunits COX4I1 (or COX4I2), COX5A, COX5B, COX6A2 (or COX6A1), COX6B1 (or COX6B2), COX6C, COX7A1 (or COX7A2), COX7B, COX7C, COX8B and NDUFA4, which are encoded in the nuclear genome. The complex exists as a monomer or a dimer and forms supercomplexes (SCs) in the inner mitochondrial membrane with NADH-ubiquinone oxidoreductase (complex I, CI) and ubiquinol-cytochrome c oxidoreductase (cytochrome b-c1 complex, complex III, CIII), resulting in different assemblies (supercomplex SCI(1)III(2)IV(1) and megacomplex MCI(2)III(2)IV(2)).

The protein resides in the mitochondrion inner membrane. It functions in the pathway energy metabolism; oxidative phosphorylation. In terms of biological role, component of the cytochrome c oxidase, the last enzyme in the mitochondrial electron transport chain which drives oxidative phosphorylation. The respiratory chain contains 3 multisubunit complexes succinate dehydrogenase (complex II, CII), ubiquinol-cytochrome c oxidoreductase (cytochrome b-c1 complex, complex III, CIII) and cytochrome c oxidase (complex IV, CIV), that cooperate to transfer electrons derived from NADH and succinate to molecular oxygen, creating an electrochemical gradient over the inner membrane that drives transmembrane transport and the ATP synthase. Cytochrome c oxidase is the component of the respiratory chain that catalyzes the reduction of oxygen to water. Electrons originating from reduced cytochrome c in the intermembrane space (IMS) are transferred via the dinuclear copper A center (CU(A)) of subunit 2 and heme A of subunit 1 to the active site in subunit 1, a binuclear center (BNC) formed by heme A3 and copper B (CU(B)). The BNC reduces molecular oxygen to 2 water molecules using 4 electrons from cytochrome c in the IMS and 4 protons from the mitochondrial matrix. This chain is Cytochrome c oxidase subunit 6B1 (COX6B1), found in Bos taurus (Bovine).